The primary structure comprises 124 residues: MENTNIVKATFDTETLEGQIKIFNAQTGGGQSFKNLPDGTIIEANAIAQYKQVSDTYGDAKEETVTTIFAADGSLYSAISKTVAEAASDLIDLVTRHKLETFKVKVVQGTSSKGNVFFSLQLSL.

This sequence belongs to the phi29likevirus single-strand-binding protein family. Monomer.

In terms of biological role, single-stranded DNA binding protein required for the elongation during viral DNA replication by strand displacement. Displaced viral DNA strands are transiently coated with the ssDNA-binding protein and therefore protected against nucleases. The latter is then probably removed by the replisome that performs lagging strand synthesis or during the events that lead up to the recombination process. Stimulates in vitro DNA replication several fold. Has helix-destabilizing activity since it removes secondary structure from the ssDNA in replicative intermediates. The sequence is that of Single-stranded DNA-binding protein (5) from Bacillus subtilis (Bacteriophage phi-29).